Reading from the N-terminus, the 402-residue chain is Protein indeterminate-domain 12 (402 aa).

The tract at residues 47–66 (TETHKPKKKRGLPGNPDPDA) is disordered. Ser-72 carries the phosphoserine modification. 2 consecutive C2H2-type zinc fingers follow at residues 82–104 (FVCE…RRGH) and 124–154 (YVCP…CRKH). The Nuclear localization signal signature appears at 146–153 (IKKHFCRK). The C2H2-type 2; degenerate zinc-finger motif lies at 159 to 183 (WKCEKCSKFYAVQSDWKAHTKICGT). Residues Cys-161, Cys-164, His-177, Cys-181, Cys-188, Cys-190, His-203, and Cys-207 each coordinate Zn(2+). The CCHC-type 2; atypical zinc-finger motif lies at 186–209 (YRCDCGTLFSRKDTFITHRAFCDA). An SHR-binding region spans residues 196 to 208 (RKDTFITHRAFCD).

The protein resides in the nucleus. In terms of biological role, probable transcription factor. The polypeptide is Protein indeterminate-domain 12 (Arabidopsis thaliana (Mouse-ear cress)).